Reading from the N-terminus, the 281-residue chain is Pantothenate synthetase (281 aa).

30–37 lines the ATP pocket; the sequence is MGNLHQGH. The Proton donor role is filled by histidine 37. Position 61 (glutamine 61) interacts with (R)-pantoate. Residue glutamine 61 coordinates beta-alanine. 149–152 provides a ligand contact to ATP; that stretch reads GNKD. A (R)-pantoate-binding site is contributed by glutamine 155. ATP is bound by residues isoleucine 178 and 186–189; that span reads MSSR.

This sequence belongs to the pantothenate synthetase family. Homodimer.

Its subcellular location is the cytoplasm. It carries out the reaction (R)-pantoate + beta-alanine + ATP = (R)-pantothenate + AMP + diphosphate + H(+). Its pathway is cofactor biosynthesis; (R)-pantothenate biosynthesis; (R)-pantothenate from (R)-pantoate and beta-alanine: step 1/1. Functionally, catalyzes the condensation of pantoate with beta-alanine in an ATP-dependent reaction via a pantoyl-adenylate intermediate. The chain is Pantothenate synthetase from Shewanella baltica (strain OS195).